The primary structure comprises 62 residues: Photosystem II reaction center protein Z (62 aa).

Helical transmembrane passes span 8–28 (AVFALIATSSLLLISVPVVFA) and 41–61 (FSGTSLWIGLVFLVGILNSLI).

This sequence belongs to the PsbZ family. PSII is composed of 1 copy each of membrane proteins PsbA, PsbB, PsbC, PsbD, PsbE, PsbF, PsbH, PsbI, PsbJ, PsbK, PsbL, PsbM, PsbT, PsbY, PsbZ, Psb30/Ycf12, at least 3 peripheral proteins of the oxygen-evolving complex and a large number of cofactors. It forms dimeric complexes.

Its subcellular location is the plastid. It is found in the chloroplast thylakoid membrane. Functionally, may control the interaction of photosystem II (PSII) cores with the light-harvesting antenna, regulates electron flow through the 2 photosystem reaction centers. PSII is a light-driven water plastoquinone oxidoreductase, using light energy to abstract electrons from H(2)O, generating a proton gradient subsequently used for ATP formation. This chain is Photosystem II reaction center protein Z, found in Oenothera elata subsp. hookeri (Hooker's evening primrose).